The following is a 65-amino-acid chain: Dybowskin-2CDYa (65 aa).

A signal peptide spans 1–22 (MFTLKKSLLLLFFIGVIKLSLC). A propeptide spanning residues 23 to 47 (EEERNADDDERRDDPDEMDVEVENR) is cleaved from the precursor. Positions 26 to 43 (RNADDDERRDDPDEMDVE) are enriched in acidic residues. Residues 26–65 (RNADDDERRDDPDEMDVEVENRSAVGRHGRRFGLRKHRKH) form a disordered region. Residues 50 to 65 (VGRHGRRFGLRKHRKH) are compositionally biased toward basic residues.

Belongs to the frog skin active peptide (FSAP) family. Brevinin subfamily. As to expression, expressed by the skin glands.

The protein resides in the secreted. In terms of biological role, antimicrobial peptide. Has activity against the Gram-positive bacterium S.aureus (MIC=6 uM) and the Gram-negative bacterium E.coli (MIC=3 uM). Lacks hemolytic activity against human erythrocytes. The chain is Dybowskin-2CDYa from Rana dybowskii (Dybovsky's frog).